The sequence spans 367 residues: 2-oxoisovalerate dehydrogenase subunit alpha (367 aa).

Substrate contacts are provided by residues F66, Y95, 128–131, and S144; that span reads MPEH. 94–96 lines the thiamine diphosphate pocket; sequence YYR. Thiamine diphosphate is bound by residues 144 to 146, 174 to 180, 204 to 208, and H273; these read SPI, GDGATSE, and NFYAI. D175, N204, and Y206 together coordinate Mg(2+).

It belongs to the BCKDHA family. In terms of assembly, heterotetramer of two alpha and two beta chains. Directly associated with ODBB in the E1 complex. Requires thiamine diphosphate as cofactor.

It carries out the reaction N(6)-[(R)-lipoyl]-L-lysyl-[protein] + 3-methyl-2-oxobutanoate + H(+) = N(6)-[(R)-S(8)-2-methylpropanoyldihydrolipoyl]-L-lysyl-[protein] + CO2. In terms of biological role, the branched-chain alpha-keto dehydrogenase complex catalyzes the overall conversion of alpha-keto acids to acyl-CoA and CO(2). It contains multiple copies of three enzymatic components: branched-chain alpha-keto acid decarboxylase (E1), lipoamide acyltransferase (E2) and lipoamide dehydrogenase (E3). The chain is 2-oxoisovalerate dehydrogenase subunit alpha from Thermus thermophilus (strain ATCC 27634 / DSM 579 / HB8).